Consider the following 180-residue polypeptide: Adenine phosphoribosyltransferase (180 aa).

This sequence belongs to the purine/pyrimidine phosphoribosyltransferase family. In terms of assembly, homodimer.

Its subcellular location is the cytoplasm. The enzyme catalyses AMP + diphosphate = 5-phospho-alpha-D-ribose 1-diphosphate + adenine. It functions in the pathway purine metabolism; AMP biosynthesis via salvage pathway; AMP from adenine: step 1/1. Its function is as follows. Catalyzes a salvage reaction resulting in the formation of AMP, that is energically less costly than de novo synthesis. This chain is Adenine phosphoribosyltransferase, found in Haemophilus influenzae (strain 86-028NP).